The primary structure comprises 106 residues: Large ribosomal subunit protein uL24 (106 aa).

This sequence belongs to the universal ribosomal protein uL24 family. In terms of assembly, part of the 50S ribosomal subunit.

One of two assembly initiator proteins, it binds directly to the 5'-end of the 23S rRNA, where it nucleates assembly of the 50S subunit. Its function is as follows. One of the proteins that surrounds the polypeptide exit tunnel on the outside of the subunit. This chain is Large ribosomal subunit protein uL24, found in Azobacteroides pseudotrichonymphae genomovar. CFP2.